The following is a 295-amino-acid chain: UDP-N-acetylenolpyruvoylglucosamine reductase (295 aa).

Residues 23–188 (KVGGPADFLA…ISAKFALKPG (166 aa)) form the FAD-binding PCMH-type domain. Arg-167 is a catalytic residue. The active-site Proton donor is the Ser-217. Glu-287 is an active-site residue.

This sequence belongs to the MurB family. It depends on FAD as a cofactor.

Its subcellular location is the cytoplasm. It catalyses the reaction UDP-N-acetyl-alpha-D-muramate + NADP(+) = UDP-N-acetyl-3-O-(1-carboxyvinyl)-alpha-D-glucosamine + NADPH + H(+). It participates in cell wall biogenesis; peptidoglycan biosynthesis. In terms of biological role, cell wall formation. This Streptococcus pyogenes serotype M18 (strain MGAS8232) protein is UDP-N-acetylenolpyruvoylglucosamine reductase.